The sequence spans 291 residues: ATP synthase gamma chain (291 aa).

Belongs to the ATPase gamma chain family. F-type ATPases have 2 components, CF(1) - the catalytic core - and CF(0) - the membrane proton channel. CF(1) has five subunits: alpha(3), beta(3), gamma(1), delta(1), epsilon(1). CF(0) has three main subunits: a, b and c.

It localises to the cell inner membrane. In terms of biological role, produces ATP from ADP in the presence of a proton gradient across the membrane. The gamma chain is believed to be important in regulating ATPase activity and the flow of protons through the CF(0) complex. This is ATP synthase gamma chain from Neisseria gonorrhoeae (strain ATCC 700825 / FA 1090).